The sequence spans 809 residues: Probable disease resistance protein At5g66900 (809 aa).

Positions 1–150 constitute an RPW8 domain; it reads MNDWASLGIG…LSKRMDLLSV (150 aa). Residues 50-86 are a coiled coil; it reads PLTQKIDSMQKELDFGVKELKELRDTIERADVAVRKF. 2 NB-ARC domains span residues 153–280 and 339–438; these read PVFR…DDVW and SPDE…DMWV. Residue 194-201 participates in ATP binding; that stretch reads APPGCGKT. Positions 494–515 form a coiled coil; that stretch reads QSEFKENLERKRLNLEILENTF. LRR repeat units lie at residues 650–672, 674–696, 698–720, and 722–744; these read KLQE…ISEI, SLKT…IGNL, RLEV…TEGL, and NLRF…IGKL.

It belongs to the disease resistance NB-LRR family.

Functionally, probable disease resistance protein. The polypeptide is Probable disease resistance protein At5g66900 (Arabidopsis thaliana (Mouse-ear cress)).